Here is a 338-residue protein sequence, read N- to C-terminus: Holliday junction branch migration complex subunit RuvB (338 aa).

Residues 1–22 (MIEADRLIHAEPQGPEERDEQI) form a disordered region. Positions 4-187 (ADRLIHAEPQ…FGIPLRLEFY (184 aa)) are large ATPase domain (RuvB-L). ATP contacts are provided by residues Arg-27, Gly-68, Lys-71, Thr-72, Thr-73, 134–136 (EDY), Arg-177, Tyr-187, and Arg-224. Thr-72 contacts Mg(2+). Positions 188–258 (NTKDLSSIVS…VADLALDMLD (71 aa)) are small ATPAse domain (RuvB-S). The head domain (RuvB-H) stretch occupies residues 261-338 (SEGFDYMDRK…RHFDIIQPEK (78 aa)). DNA-binding residues include Arg-297, Arg-316, and Arg-321.

It belongs to the RuvB family. Homohexamer. Forms an RuvA(8)-RuvB(12)-Holliday junction (HJ) complex. HJ DNA is sandwiched between 2 RuvA tetramers; dsDNA enters through RuvA and exits via RuvB. An RuvB hexamer assembles on each DNA strand where it exits the tetramer. Each RuvB hexamer is contacted by two RuvA subunits (via domain III) on 2 adjacent RuvB subunits; this complex drives branch migration. In the full resolvosome a probable DNA-RuvA(4)-RuvB(12)-RuvC(2) complex forms which resolves the HJ.

It is found in the cytoplasm. The enzyme catalyses ATP + H2O = ADP + phosphate + H(+). Functionally, the RuvA-RuvB-RuvC complex processes Holliday junction (HJ) DNA during genetic recombination and DNA repair, while the RuvA-RuvB complex plays an important role in the rescue of blocked DNA replication forks via replication fork reversal (RFR). RuvA specifically binds to HJ cruciform DNA, conferring on it an open structure. The RuvB hexamer acts as an ATP-dependent pump, pulling dsDNA into and through the RuvAB complex. RuvB forms 2 homohexamers on either side of HJ DNA bound by 1 or 2 RuvA tetramers; 4 subunits per hexamer contact DNA at a time. Coordinated motions by a converter formed by DNA-disengaged RuvB subunits stimulates ATP hydrolysis and nucleotide exchange. Immobilization of the converter enables RuvB to convert the ATP-contained energy into a lever motion, pulling 2 nucleotides of DNA out of the RuvA tetramer per ATP hydrolyzed, thus driving DNA branch migration. The RuvB motors rotate together with the DNA substrate, which together with the progressing nucleotide cycle form the mechanistic basis for DNA recombination by continuous HJ branch migration. Branch migration allows RuvC to scan DNA until it finds its consensus sequence, where it cleaves and resolves cruciform DNA. The polypeptide is Holliday junction branch migration complex subunit RuvB (Shewanella sediminis (strain HAW-EB3)).